The sequence spans 371 residues: Cytochrome b (371 aa).

The next 4 helical transmembrane spans lie at 25-45 (FGSM…FLAV), 69-90 (WMMQ…YIHI), 105-125 (WMSG…GYVL), and 170-190 (FFAL…LHII). His75 and His89 together coordinate heme b. 2 residues coordinate heme b: His174 and His188. Residue His193 participates in a ubiquinone binding. The next 4 membrane-spanning stretches (helical) occupy residues 218-238 (YKDL…VSFF), 280-300 (LGGA…PFTH), 312-332 (LSQL…WAAT), and 339-358 (YIII…ISMP).

This sequence belongs to the cytochrome b family. In terms of assembly, the cytochrome bc1 complex contains 3 respiratory subunits (MT-CYB, CYC1 and UQCRFS1), 2 core proteins (UQCRC1 and UQCRC2) and probably 6 low-molecular weight proteins. Requires heme b as cofactor.

It localises to the mitochondrion inner membrane. Its function is as follows. Component of the ubiquinol-cytochrome c reductase complex (complex III or cytochrome b-c1 complex) that is part of the mitochondrial respiratory chain. The b-c1 complex mediates electron transfer from ubiquinol to cytochrome c. Contributes to the generation of a proton gradient across the mitochondrial membrane that is then used for ATP synthesis. This is Cytochrome b (MT-CYB) from Python molurus (Indian python).